The sequence spans 369 residues: Ferredoxin--NADP reductase, chloroplastic (369 aa).

A chloroplast-targeting transit peptide spans 1 to 55; it reads MTTAVTAAVSFPSTKTTSLSARSSSVISPDKISYKKVPLYYRNVSATGKMGPIRA. In terms of domain architecture, FAD-binding FR-type spans 90–212; the sequence is KTPYVGRCLL…TGPVGKEMLM (123 aa). FAD contacts are provided by residues 148-151, 169-171, Y175, 186-188, and T227; these read RLYS, CVK, and VCS. NADP(+)-binding residues include S151 and K171. NADP(+) contacts are provided by residues T227, 259-260, 289-290, 299-301, 328-329, and E367; these read VP, SR, KMY, and GL.

This sequence belongs to the ferredoxin--NADP reductase type 1 family. FAD is required as a cofactor.

Its subcellular location is the plastid. It is found in the chloroplast stroma. The protein resides in the chloroplast thylakoid membrane. It carries out the reaction 2 reduced [2Fe-2S]-[ferredoxin] + NADP(+) + H(+) = 2 oxidized [2Fe-2S]-[ferredoxin] + NADPH. It participates in energy metabolism; photosynthesis. May play a key role in regulating the relative amounts of cyclic and non-cyclic electron flow to meet the demands of the plant for ATP and reducing power. In Spinacia oleracea (Spinach), this protein is Ferredoxin--NADP reductase, chloroplastic (PETH).